The chain runs to 1444 residues: MTAKEEEKQERFQLLMTQIGLQDVTTYEEFTKDAKIEKLVADKKNKTWQFHLHVPQIFPAALFHMMDVGMKRAFSQIAETEMQIVPENQTINETLIQDYWNLIVEPIGKQSPMIGKLLMEQKPTFKEPHFIEVAVHNDMEEATIQQRFQTKIIESYGKAGFPRLAMKMHMLDQSETDEYKAFAQAKQEEDQKKAAEAVQVMQKRQAEGQSGGGGAAPLTGPFQIGYKIKDDEEVKRLGDIYDEERRITVQGLIFATEIRELRSGRSLLQFKITDYTSSMIIKMFSRDNEDAAMFQNLKKGMWVKVRGSVQNDTFVRDLIMMAQDVNEIAGVKRLDTAEEKRAELHLHSPMSQMDATSSVDSLFKQAADWGHKAIAITDHSVAQSFPEAYGAGQKYGLKVIFGIEANLIDDGVPIAYNDQHIALEDATYCVFDVETTGLSAVYDTIIELAGVKMKNGEIIDKFEAFIDPGHPLSATTINLTGITDDMVKGSDPIDVVLKRFKEWSGDDILVAHNASFDMGFINTAYEKVGLEKAENAVVDTLELARFLYPHFKNHRLNTLTKKFNIILEQHHRAVFDAEATAYLAWKLIKDAKEMHNIDFHDSLNDYMGEGDAYKRARPFHATIYAQTAVGLKNLFKLITMSNINYFYRVPRIPRSQLKKLREGLIIGTACSQGELFEAMMQKGMQAAEKVAEFYDFIEVQPKPVYAPLIERELVRDEKALEEILKNIVRVGEKTGKPVVATGNVHYKDPVDKIYRKILIHSQGGANPLNRAELPDVHFRTTDEMLKEFAFLGEEKAKEIVVTNANLVVDWMENLKPIKDELYTPKIDGAEDEVRNMSYAMAHQLYGEKLPEIVEARLEKELKSIIGHGFAVIYLISHKLVKKSLVDGYLVGSRGSVGSSFVATMTEITEVNPLPPHYLCPNCKDSEFFDDGSVGSGFDLPDKDCPHCGTAYQKEGQDIPFETFLGFKGDKVPDIDLNFSGDYQPVAHAYTKEIFGEDYVFRAGTIGTVAEKTAFGYVRNYERDMNMTIRGAEIDRLVAGCTGVKRTTGQHPGGIIVIPDYMDVYDFTPVQFPADATDSEWKTTHFDFHSIHDNVLKLDILGHDDPTAIRMLQDLSGIDPKTIPTDDPDVMKLFGSTESLGVKPADIDSKTGTLGIPEFGTRFVRQMLEQTKPTTFSELVQISGLSHGTDVWLGNAEELIKNKTCELPDVIGCRDDIMVFLIYQGLESSLAFKIMESVRKGKGLTDEMEEAMMANKVPLWYIESCKKIKYMFPKAHAAAYVLMAVRIAYFKVHYPLYFYATYFTVRADDFDLTSMVNGKEAVKATMKEVNDKGMEASTKEKNLLTVLEIANEMLARGFHFQKVDLYKSSADEFIIDGESLIPPFNAIPSLGTNVAKQIVAARENGEFLSKEDLQQRGKVSKTIIQYMDDQGCLEGLPDQNQLSLF.

Residues tyrosine 428–alanine 584 enclose the Exonuclease domain.

Belongs to the DNA polymerase type-C family. PolC subfamily.

The protein resides in the cytoplasm. The enzyme catalyses DNA(n) + a 2'-deoxyribonucleoside 5'-triphosphate = DNA(n+1) + diphosphate. Required for replicative DNA synthesis. This DNA polymerase also exhibits 3' to 5' exonuclease activity. The chain is DNA polymerase III PolC-type from Listeria monocytogenes serovar 1/2a (strain ATCC BAA-679 / EGD-e).